Consider the following 448-residue polypeptide: Packaging protein 1 (448 aa).

Residues 1-76 (METKGRRSAA…SQPAKRGGLL (76 aa)) are disordered. The segment covering 22-31 (PRKRPTRRAP) has biased composition (basic residues). Residues 56–67 (RPSSDSLLQEPS) are compositionally biased toward polar residues. 171–178 (GPTGCGKS) contacts ATP. A DNA-binding region spans residues 440–448 (RAYRARKIK).

It belongs to the adenoviridae packaging protein 1 family. Homodimer. Part of a genome packaging complex composed of packaging proteins 1, 2 and 3; this complex specifically binds to the packaging sequence on the left end of viral genomic DNA and performs packaging of the viral genome. Interacts with protein 33K.

The protein localises to the virion. The protein resides in the host nucleus. Its subcellular location is the host nucleoplasm. It is found in the host nucleolus. In terms of biological role, component of the packaging machinery which encapsidates the viral DNA into preformed capsids and transcriptional activator of the viral major late promoter (MLP). Binds, along with packaging proteins 2 and 3, to the specific packaging sequence on the left end of viral genomic DNA and displays ATPase activity thereby providing the power stroke of the packaging machinery. The activity of packaging protein IVa2 is stimulated by protein 33K which acts as a terminase. May be the protein that pumps DNA into the capsid powered by ATP hydrolysis. Specifically binds to the 5'-CG-3' nucleotides of the repeats making up the packaging sequence. Component of the DEF-A and DEF-B transcription factors that bind downstream elements of the major late promoter (MLP), and stimulate transcription from the MLP after initiation of viral DNA replication. DEF-A is a heterodimer packaging proteins 1 and 2 and DEF-B is a homodimer of packaging protein 1. This Human adenovirus B serotype 7 (HAdV-7) protein is Packaging protein 1.